Here is a 370-residue protein sequence, read N- to C-terminus: 3-dehydroquinate synthase (370 aa).

NAD(+) contacts are provided by residues 112-116, 136-137, Lys149, Lys158, and 176-179; these read GVIGD, TT, and TLKT. Glu191, His256, and His273 together coordinate Zn(2+).

The protein belongs to the sugar phosphate cyclases superfamily. Dehydroquinate synthase family. It depends on Co(2+) as a cofactor. Zn(2+) is required as a cofactor. Requires NAD(+) as cofactor.

It is found in the cytoplasm. The enzyme catalyses 7-phospho-2-dehydro-3-deoxy-D-arabino-heptonate = 3-dehydroquinate + phosphate. It participates in metabolic intermediate biosynthesis; chorismate biosynthesis; chorismate from D-erythrose 4-phosphate and phosphoenolpyruvate: step 2/7. Functionally, catalyzes the conversion of 3-deoxy-D-arabino-heptulosonate 7-phosphate (DAHP) to dehydroquinate (DHQ). The sequence is that of 3-dehydroquinate synthase from Prochlorococcus marinus (strain MIT 9211).